The following is a 53-amino-acid chain: Light-harvesting protein B-800/850 alpha chain (53 aa).

Residues 1-14 are Cytoplasmic-facing; it reads MNQGKIWTVVNPSV. Residues 15-35 traverse the membrane as a helical segment; the sequence is GLPLLLGSVTVIAILVHAAVL. His-31 contributes to the a bacteriochlorophyll binding site. Topologically, residues 36-53 are periplasmic; that stretch reads SHTTWFPAYWQGGLKKAA.

It belongs to the antenna complex alpha subunit family. In terms of assembly, the core complex is formed by different alpha and beta chains, binding bacteriochlorophyll molecules, and arranged most probably in tetrameric structures disposed around the reaction center. The non-pigmented gamma chains may constitute additional components.

The protein resides in the cell inner membrane. Functionally, antenna complexes are light-harvesting systems, which transfer the excitation energy to the reaction centers. This is Light-harvesting protein B-800/850 alpha chain from Rhodoblastus acidophilus (Rhodopseudomonas acidophila).